Consider the following 99-residue polypeptide: Malonate decarboxylase acyl carrier protein (99 aa).

O-(phosphoribosyl dephospho-coenzyme A)serine is present on serine 25.

Belongs to the MdcC family. Post-translationally, covalently binds the prosthetic group of malonate decarboxylase.

The protein resides in the cytoplasm. Subunit of malonate decarboxylase, it is an acyl carrier protein to which acetyl and malonyl thioester residues are bound via a 2'-(5''-phosphoribosyl)-3'-dephospho-CoA prosthetic group and turn over during the catalytic mechanism. The protein is Malonate decarboxylase acyl carrier protein of Pseudomonas fluorescens (strain ATCC BAA-477 / NRRL B-23932 / Pf-5).